We begin with the raw amino-acid sequence, 511 residues long: MTINPSNVENSSSKINSYFSKLTDYIWPIKRHEVSKFLFITLLMFCILFIQNLIRALKDSIVTTMIGAEIISFLKFWGVMPSAFLMTAIYVKLVNKMKAENIFYLIISIFLTFFALFAYVIFPNHEMLHFSPVTVQNLMASLPNLKWFIWLLSKWSFSLFYIIAELWPNVVFALLFWQFVNNITTVEESKRFYPLFGLLSQTGIYLAGQFLENLSNINDYVTNKFALQSSFHTLSIQIILTIVLILGIIAIKTFWLLNHKVLDKEHMALLRFKAKKKSMTIAESFQMLLSSRHIRLIATLLICYGIAINLVEGPWKAAATKIYKTPTEYAAFIGSYLSYTGVFTILFVVLGSNIVRRLGWFTAAVITPLIVFITGILFFAVNNFERFAGLIIANFILTDPALIAITIGAIQNVLSKSSKYTLFDSTKEMAYVPLDPEIKIKGKAAADVIGTKLGKSGSAFLQSLVFIILPSASYQSISTCLMIIFIITCLTWLWATKALNKEYKNSIKFSQ.

12 helical membrane passes run 34-54 (VSKF…QNLI), 70-90 (IISF…TAIY), 102-122 (IFYL…YVIF), 157-177 (FSLF…LLFW), 192-212 (FYPL…QFLE), 231-251 (FHTL…IIAI), 296-316 (LIAT…GPWK), 330-350 (AAFI…FVVL), 361-381 (FTAA…FFAV), 390-410 (LIIA…IGAI), 453-473 (LGKS…PSAS), and 476-496 (SIST…LWAT).

It belongs to the ADP/ATP translocase tlc family.

It is found in the cell membrane. Provides the rickettsial cell with host ATP in exchange for rickettsial ADP. This is an obligate exchange system. This energy acquiring activity is an important component of rickettsial parasitism. The sequence is that of ADP,ATP carrier protein 4 (tlcD) from Rickettsia conorii (strain ATCC VR-613 / Malish 7).